The primary structure comprises 347 residues: MSGLLCYCRQGFEPELAAELSARAAFVGIAGYARTQRNDGYVLFVCDEAAQLAARLQWRELIFARQKLVVLAELKGLDPKDRITPILAALDGQPRFGDLWVEHPDSDAGKPLAGLARSFGNALRPALRKAGLLTDKPQARLPRLHICFLDGDHALLAVADSSDSAPWPLGIPRLKLLPEAPSRSALKLDEALLTLLTPEEREQLVKPGMRAADLGAAPGGWTWVLTRQHVHVTSVDNGPLREHVLATGLVEHLRADGFHWKPAQPLDWMVCDMVEQPRRVAERMATWVREGWCRHTIFNLKLPMKKRWDETRLCLDLFEQQAEKSLTVRAKQLYHDREEITVLAMRG.

Residues S184, 217-220 (APGG), D236, D256, and D272 contribute to the S-adenosyl-L-methionine site. K301 acts as the Proton acceptor in catalysis.

This sequence belongs to the class I-like SAM-binding methyltransferase superfamily. RNA methyltransferase RlmE family. RlmM subfamily. Monomer.

The protein localises to the cytoplasm. It catalyses the reaction cytidine(2498) in 23S rRNA + S-adenosyl-L-methionine = 2'-O-methylcytidine(2498) in 23S rRNA + S-adenosyl-L-homocysteine + H(+). Functionally, catalyzes the 2'-O-methylation at nucleotide C2498 in 23S rRNA. The protein is Ribosomal RNA large subunit methyltransferase M of Xanthomonas campestris pv. campestris (strain 8004).